A 285-amino-acid chain; its full sequence is Glutamate racemase (285 aa).

Residues 28–29 (DS) and 60–61 (YG) contribute to the substrate site. Catalysis depends on Cys-92, which acts as the Proton donor/acceptor. 93 to 94 (NT) serves as a coordination point for substrate. The active-site Proton donor/acceptor is Cys-204. 205–206 (TH) contributes to the substrate binding site.

This sequence belongs to the aspartate/glutamate racemases family.

It carries out the reaction L-glutamate = D-glutamate. Its pathway is cell wall biogenesis; peptidoglycan biosynthesis. Provides the (R)-glutamate required for cell wall biosynthesis. This chain is Glutamate racemase, found in Escherichia coli (strain UTI89 / UPEC).